Reading from the N-terminus, the 127-residue chain is Serum amyloid A protein (127 aa).

A signal peptide spans Met1 to Ser18. Pyrrolidone carboxylic acid is present on Gln19. Positions Gly89 to Tyr127 are disordered. Basic and acidic residues predominate over residues Glu104–Tyr127.

It belongs to the SAA family. As to expression, expressed by the liver; secreted in plasma.

It localises to the secreted. Major acute phase reactant. Apolipoprotein of the HDL complex. This chain is Serum amyloid A protein (SAA1), found in Notamacropus eugenii (Tammar wallaby).